We begin with the raw amino-acid sequence, 591 residues long: Aspartate--tRNA(Asp/Asn) ligase (591 aa).

Residue Glu176 coordinates L-aspartate. The segment at 200-203 (QLFK) is aspartate. Residue Arg222 participates in L-aspartate binding. Residues 222–224 (RDE) and Gln231 each bind ATP. His450 serves as a coordination point for L-aspartate. Residue Glu484 coordinates ATP. Arg491 lines the L-aspartate pocket. ATP is bound at residue 536 to 539 (GLDR).

This sequence belongs to the class-II aminoacyl-tRNA synthetase family. Type 1 subfamily. In terms of assembly, homodimer.

The protein resides in the cytoplasm. The enzyme catalyses tRNA(Asx) + L-aspartate + ATP = L-aspartyl-tRNA(Asx) + AMP + diphosphate. Aspartyl-tRNA synthetase with relaxed tRNA specificity since it is able to aspartylate not only its cognate tRNA(Asp) but also tRNA(Asn). Reaction proceeds in two steps: L-aspartate is first activated by ATP to form Asp-AMP and then transferred to the acceptor end of tRNA(Asp/Asn). This is Aspartate--tRNA(Asp/Asn) ligase from Bacillus cereus (strain ATCC 10987 / NRS 248).